We begin with the raw amino-acid sequence, 192 residues long: Virion infectivity factor (192 aa).

The tract at residues 14-17 (DRMR) is interaction with host APOBEC3F; F1-box. The tract at residues 40–44 (YRHHF) is interaction with host APOBEC3G; G-box. The interval 54 to 72 (EVHIPLETAELVITTYWGL) is interaction with host APOBEC3F and APOBEC3G; FG-box. An interaction with host APOBEC3F; F2-box region spans residues 74–79 (PGEREW). Positions 75–114 (GEREWHLGQGVSIEWRQGRYRTQIDPGLADQLIHIYYFDC) are RNA-binding. Thr-96 is modified (phosphothreonine; by host MAP4K1). Zn(2+) contacts are provided by His-108, Cys-114, Cys-133, and His-139. The short motif at 108–139 (HIYYFDCFSESAIRKAILGHKISPRCNYQAGH) is the HCCH motif element. The residue at position 144 (Ser-144) is a Phosphoserine; by host. A BC-box-like motif motif is present at residues 144–153 (SLQYLALTAL). The tract at residues 151-164 (TALIAPKKTKPPLP) is multimerization. The segment at 151 to 180 (TALIAPKKTKPPLPSVQKLVEDRWNKPQKT) is SOCS box-like. The tract at residues 164–192 (PSVQKLVEDRWNKPQKTRGHRESHTMNGH) is disordered. Phosphoserine; by host MAP4K1 is present on Ser-165. Positions 171-172 (ED) are membrane association. Positions 183-192 (HRESHTMNGH) are enriched in basic and acidic residues. Thr-188 carries the phosphothreonine; by host modification.

It belongs to the primate lentivirus group Vif protein family. As to quaternary structure, homomultimer; in vitro and presumably in vivo. Interacts with viral RNA and Pr55Gag precursor; these interactions mediate Vif incorporation into the virion. Interacts with the viral reverse transcriptase. Forms cullin-5-RING E3 ubiquitin-protein ligase complex (ECS complex) by interacting with host CUL5, RBX2, elongin BC complex (ELOB and ELOC) and CBFB/CBF-beta. Within the ECS complex, Vif interacts directly with host CUL5, ELOC and APOBEC (APOBEC3F and APOBEC3G) substrates. The ECS complex also contains some single-stranded RNA (ssRNA) that acts as a glue that bridges Vif with APOBEC (APOBEC3F and APOBEC3G) substrates. Interacts with host UBCE7IP1 isoform 3/ZIN and possibly with SAT. Interacts with host tyrosine kinases HCK and FYN; these interactions may decrease level of phosphorylated APOBEC3G incorporation into virions. Interacts with host ABCE1; this interaction may play a role in protecting viral RNA from damage during viral assembly. Interacts with host MDM2; this interaction targets Vif for degradation by the proteasome. In terms of processing, processed in virion by the viral protease. Highly phosphorylated on serine and threonine residues. Post-translationally, polyubiquitinated and degraded by the proteasome in the presence of APOBEC3G.

The protein resides in the host cytoplasm. It is found in the host cell membrane. Its subcellular location is the virion. Counteracts the innate antiviral activity of host APOBEC3F and APOBEC3G by promoting their ubiquitination and degradation. Acts as a substrate recognition component of an E3 ubiquitin-protein ligase complex: mechanistically, Vif hijacks a host cullin-5-RING E3 ubiquitin-protein ligase complex (ECS complex) and the transcription coactivator CBFB/CBF-beta to form an active E3 ubiquitin-protein ligase complex that targets APOBEC3G and APOBEC3F for polyubiquitination, leading to their degradation by the proteasome. Vif interaction with APOBEC3G also blocks its cytidine deaminase activity in a proteasome-independent manner, suggesting a dual inhibitory mechanism. May interact directly with APOBEC3G mRNA in order to inhibit its translation. Association with CBFB/CBF-beta also inhibits the transcription coactivator activity of CBFB/CBF-beta. Seems to play a role in viral morphology by affecting the stability of the viral nucleoprotein core. Finally, Vif also contributes to the G2 cell cycle arrest observed in HIV infected cells. This chain is Virion infectivity factor, found in Homo sapiens (Human).